We begin with the raw amino-acid sequence, 216 residues long: Uracil phosphoribosyltransferase (216 aa).

Residues Arg85, Arg110, and 135-143 each bind 5-phospho-alpha-D-ribose 1-diphosphate; that span reads DPMVATGYS. Uracil is bound by residues Ile200 and 205-207; that span reads GDA. Position 206 (Asp206) interacts with 5-phospho-alpha-D-ribose 1-diphosphate.

This sequence belongs to the UPRTase family. The cofactor is Mg(2+).

It carries out the reaction UMP + diphosphate = 5-phospho-alpha-D-ribose 1-diphosphate + uracil. The protein operates within pyrimidine metabolism; UMP biosynthesis via salvage pathway; UMP from uracil: step 1/1. Allosterically activated by GTP. Functionally, catalyzes the conversion of uracil and 5-phospho-alpha-D-ribose 1-diphosphate (PRPP) to UMP and diphosphate. This chain is Uracil phosphoribosyltransferase, found in Burkholderia lata (strain ATCC 17760 / DSM 23089 / LMG 22485 / NCIMB 9086 / R18194 / 383).